A 416-amino-acid chain; its full sequence is D-amino acid dehydrogenase 2 (416 aa).

Position 3-17 (3-17) interacts with FAD; it reads ITVLGAGVVGTAAAY.

The protein belongs to the DadA oxidoreductase family. FAD is required as a cofactor.

It carries out the reaction a D-alpha-amino acid + A + H2O = a 2-oxocarboxylate + AH2 + NH4(+). Oxidative deamination of D-amino acids. The chain is D-amino acid dehydrogenase 2 (dadA2) from Mesorhizobium japonicum (strain LMG 29417 / CECT 9101 / MAFF 303099) (Mesorhizobium loti (strain MAFF 303099)).